Reading from the N-terminus, the 226-residue chain is V-type proton ATPase subunit E 2 (226 aa).

Belongs to the V-ATPase E subunit family. As to quaternary structure, V-ATPase is a heteromultimeric enzyme made up of two complexes: the ATP-hydrolytic V1 complex and the proton translocation V0 complex. The V1 complex consists of three catalytic AB heterodimers that form a heterohexamer, three peripheral stalks each consisting of EG heterodimers, one central rotor including subunits D and F, and the regulatory subunits C and H. The proton translocation complex V0 consists of the proton transport subunit a, a ring of proteolipid subunits c9c'', rotary subunit d, subunits e and f, and the accessory subunits ATP6AP1/Ac45 and ATP6AP2/PRR. As to expression, testis specific.

Its function is as follows. Subunit of the V1 complex of vacuolar(H+)-ATPase (V-ATPase), a multisubunit enzyme composed of a peripheral complex (V1) that hydrolyzes ATP and a membrane integral complex (V0) that translocates protons. V-ATPase is responsible for acidifying and maintaining the pH of intracellular compartments and in some cell types, is targeted to the plasma membrane, where it is responsible for acidifying the extracellular environment. This Mus musculus (Mouse) protein is V-type proton ATPase subunit E 2 (Atp6v1e2).